A 284-amino-acid chain; its full sequence is Ermin (284 aa).

Residues 1–61 are disordered; that stretch reads MTDVPATFTQ…APTKGSQEER (61 aa). Phosphoserine is present on serine 73. The interval 108 to 251 is disordered; sequence TFREGRQWEK…PTLGKKSDIS (144 aa). 2 stretches are compositionally biased toward basic and acidic residues: residues 126–140 and 171–183; these read EIRRQKERITEQPLK and LHSKHDEEQKVWD. Residues 184–200 show a composition bias toward acidic residues; sequence EEIDDDDDDNCNDDEDE. The span at 201–220 shows a compositional bias: basic and acidic residues; that stretch reads VRVIEFKKKHEEVSQFKEEG. Phosphoserine is present on residues serine 214, serine 226, serine 230, and serine 233. Over residues 225-235 the composition is skewed to low complexity; the sequence is DSPLSSASSQA. A Phosphothreonine modification is found at threonine 237. The interval 265-284 is binds actin; the sequence is KIRKGNTKQRIDEFESMMHL.

As to quaternary structure, binds actin.

It is found in the cytoplasm. Its subcellular location is the cytoskeleton. Functionally, plays a role in cytoskeletal rearrangements during the late wrapping and/or compaction phases of myelinogenesis as well as in maintenance and stability of myelin sheath in the adult. May play an important role in late-stage oligodendroglia maturation, myelin/Ranvier node formation during CNS development, and in the maintenance and plasticity of related structures in the mature CNS. The protein is Ermin (ERMN) of Pongo abelii (Sumatran orangutan).